The chain runs to 438 residues: Gamma-glutamyl phosphate reductase (438 aa).

It belongs to the gamma-glutamyl phosphate reductase family.

The protein resides in the cytoplasm. The catalysed reaction is L-glutamate 5-semialdehyde + phosphate + NADP(+) = L-glutamyl 5-phosphate + NADPH + H(+). Its pathway is amino-acid biosynthesis; L-proline biosynthesis; L-glutamate 5-semialdehyde from L-glutamate: step 2/2. Functionally, catalyzes the NADPH-dependent reduction of L-glutamate 5-phosphate into L-glutamate 5-semialdehyde and phosphate. The product spontaneously undergoes cyclization to form 1-pyrroline-5-carboxylate. This is Gamma-glutamyl phosphate reductase from Prochlorococcus marinus (strain NATL1A).